Here is a 367-residue protein sequence, read N- to C-terminus: 3-isopropylmalate dehydrogenase (367 aa).

Position 80 to 93 (80 to 93 (GKEWTHLPADEQPE)) interacts with NAD(+). 4 residues coordinate substrate: Arg-101, Arg-111, Arg-140, and Asp-230. Mg(2+)-binding residues include Asp-230, Asp-254, and Asp-258. NAD(+) is bound at residue 288–300 (GSAPDLKGKNIAN).

The protein belongs to the isocitrate and isopropylmalate dehydrogenases family. LeuB type 1 subfamily. In terms of assembly, homodimer. Mg(2+) serves as cofactor. The cofactor is Mn(2+).

Its subcellular location is the cytoplasm. It catalyses the reaction (2R,3S)-3-isopropylmalate + NAD(+) = 4-methyl-2-oxopentanoate + CO2 + NADH. Its pathway is amino-acid biosynthesis; L-leucine biosynthesis; L-leucine from 3-methyl-2-oxobutanoate: step 3/4. Functionally, catalyzes the oxidation of 3-carboxy-2-hydroxy-4-methylpentanoate (3-isopropylmalate) to 3-carboxy-4-methyl-2-oxopentanoate. The product decarboxylates to 4-methyl-2 oxopentanoate. The chain is 3-isopropylmalate dehydrogenase (leuB) from Buchnera aphidicola subsp. Cinara cedri (strain Cc).